The sequence spans 138 residues: Acidic phospholipase A2 pgPLA 1b/pgPLA 2b (138 aa).

An N-terminal signal peptide occupies residues 1-16; sequence MRTLWIMAVLLVGVKG. 7 cysteine pairs are disulfide-bonded: C42/C131, C44/C60, C59/C111, C65/C138, C66/C104, C73/C97, and C91/C102. Ca(2+) is bound by residues Y43, G45, and G47. The active site involves H63. D64 contributes to the Ca(2+) binding site. Residue D105 is part of the active site.

It belongs to the phospholipase A2 family. Group II subfamily. D49 sub-subfamily. Requires Ca(2+) as cofactor. Expressed by the venom gland.

It localises to the secreted. It carries out the reaction a 1,2-diacyl-sn-glycero-3-phosphocholine + H2O = a 1-acyl-sn-glycero-3-phosphocholine + a fatty acid + H(+). PLA2 catalyzes the calcium-dependent hydrolysis of the 2-acyl groups in 3-sn-phosphoglycerides. This Protobothrops flavoviridis (Habu) protein is Acidic phospholipase A2 pgPLA 1b/pgPLA 2b.